We begin with the raw amino-acid sequence, 173 residues long: Crossover junction endodeoxyribonuclease RuvC (173 aa).

Residues D8, E68, and D140 contribute to the active site. Mg(2+)-binding residues include D8, E68, and D140.

It belongs to the RuvC family. As to quaternary structure, homodimer which binds Holliday junction (HJ) DNA. The HJ becomes 2-fold symmetrical on binding to RuvC with unstacked arms; it has a different conformation from HJ DNA in complex with RuvA. In the full resolvosome a probable DNA-RuvA(4)-RuvB(12)-RuvC(2) complex forms which resolves the HJ. Requires Mg(2+) as cofactor.

The protein resides in the cytoplasm. The catalysed reaction is Endonucleolytic cleavage at a junction such as a reciprocal single-stranded crossover between two homologous DNA duplexes (Holliday junction).. Its function is as follows. The RuvA-RuvB-RuvC complex processes Holliday junction (HJ) DNA during genetic recombination and DNA repair. Endonuclease that resolves HJ intermediates. Cleaves cruciform DNA by making single-stranded nicks across the HJ at symmetrical positions within the homologous arms, yielding a 5'-phosphate and a 3'-hydroxyl group; requires a central core of homology in the junction. The consensus cleavage sequence is 5'-(A/T)TT(C/G)-3'. Cleavage occurs on the 3'-side of the TT dinucleotide at the point of strand exchange. HJ branch migration catalyzed by RuvA-RuvB allows RuvC to scan DNA until it finds its consensus sequence, where it cleaves and resolves the cruciform DNA. The polypeptide is Crossover junction endodeoxyribonuclease RuvC (Saccharophagus degradans (strain 2-40 / ATCC 43961 / DSM 17024)).